The chain runs to 450 residues: Alpha-2B adrenergic receptor (450 aa).

Residues 1–12 (MDHQDPYSVQAT) lie on the Extracellular side of the membrane. The chain crosses the membrane as a helical span at residues 13–38 (AAIAAAITFLILFTIFGNALVILAVL). Over 39–48 (TSRSLRAPQN) the chain is Cytoplasmic. Residues 49-69 (LFLVSLAAADILVATLIIPFS) form a helical membrane-spanning segment. Over 70 to 86 (LANELLGYWYFRRTWCE) the chain is Extracellular. Cys85 and Cys164 are oxidised to a cystine. The chain crosses the membrane as a helical span at residues 87–107 (VYLALDVLFCTSSIVHLCAIS). Residues 108 to 128 (LDRYWAVSRALEYNSKRTPRR) are Cytoplasmic-facing. Residues 129–149 (IKCIILTVWLIAAVISLPPLI) traverse the membrane as a helical segment. The Extracellular portion of the chain corresponds to 150–172 (YKGDQGPQPRGRPQCKLNQEAWY). Residues 173-193 (ILASSIGSFFAPCLIMILVYL) form a helical membrane-spanning segment. Residues 194-368 (RIYLIAKRSN…RRAQLTREKR (175 aa)) lie on the Cytoplasmic side of the membrane. 2 disordered regions span residues 204-229 (RRGPRAKGGPGQGESKQPRPDHGGAL) and 241-329 (ASAR…PLQQ). The segment covering 246–256 (VNGHSKSTGEK) has biased composition (basic and acidic residues). Acidic residues predominate over residues 293–311 (PEDEAEEEEEEEEEEEECE). Residues 312 to 326 (PQAVPVSPASACSPP) are compositionally biased toward low complexity. A helical membrane pass occupies residues 369–389 (FTFVLAVVIGVFVLCWFPFFF). Topologically, residues 390 to 405 (SYSLGAICPKHCKVPH) are extracellular. Residues 406–426 (GLFQFFFWIGYCNSSLNPVIY) traverse the membrane as a helical segment. Residues 427-450 (TIFNQDFRRAFRRILCRPWTQTAW) are Cytoplasmic-facing. Residue Cys442 is the site of S-palmitoyl cysteine attachment.

This sequence belongs to the G-protein coupled receptor 1 family. Adrenergic receptor subfamily. ADRA2B sub-subfamily. As to quaternary structure, interacts with RAB26. Interacts with PPP1R9B. Interacts with GGA1, GGA2 and GGA3.

The protein resides in the cell membrane. Alpha-2 adrenergic receptors mediate the catecholamine-induced inhibition of adenylate cyclase through the action of G proteins. The rank order of potency for agonists of this receptor is clonidine &gt; norepinephrine &gt; epinephrine = oxymetazoline &gt; dopamine &gt; p-tyramine = phenylephrine &gt; serotonin &gt; p-synephrine / p-octopamine. For antagonists, the rank order is yohimbine &gt; chlorpromazine &gt; phentolamine &gt; mianserine &gt; spiperone &gt; prazosin &gt; alprenolol &gt; propanolol &gt; pindolol. The chain is Alpha-2B adrenergic receptor (ADRA2B) from Homo sapiens (Human).